A 684-amino-acid chain; its full sequence is MTVPATDSCPAPIRVPAGTTAAAAVRDAGLPGRGAPDAVVVVRDASGTLRDLSWVPDTDAEVVPVAANTDEGRSVIRHSAAHVLAQAVQELFPQAKLGIGPPITDGFYYDFDVPEPFTPEDLDKLEKRMRQIVKEGQLFSRRVYESKEQARAELAGEPYKLELVDDKSGDPDIMEVGGDELTAYDNLNPRTRERVWGDLCRGPHIPTTRHIPAFKLTRSSAAYWRGDQNNASLQRIYGTAWESQEALDDHLRLIEEAQRRDHRKLGSELDLFSFPDEIGSGLAVFHPRGGVVRRELEEYSRRKHIEAGYEFVNTPHITKAQLFHTSGHLDWYADGMFPPMHLDAEYDDDGTVRKPGQDYYLKPMNCPMHTLIYRSRGRSYRELPLRLFEFGTVYRYEKSGVVHGLTRARGFTMDDSHIFCTREQLHGELASLLRFVLELLGDYGLTDFYLELSTKDPDKFVGSDEVWEQATTSLADVAAESGLELVPDPGGAAFYGPKISVQARDALGRSWQMSTIQVDFNFPERFELEYTASDGTRQRPVMIHRALFGSIERFFGILTEHYAGAFPAWLAPVQAVGIPVADEHVPYLESVAAQLKSYGVRVEVDASDDRMAKKIVHHTAQKVPFMLLAGDRDVAAGAVSFRFGDRTQINGVPRDSAVDAIVKWIADRENSVPSAELVKVSSGE.

A TGS domain is found at 1–66 (MTVPATDSCP…DTDAEVVPVA (66 aa)). The tract at residues 261 to 567 (DHRKLGSELD…LTEHYAGAFP (307 aa)) is catalytic. C366, H417, and H544 together coordinate Zn(2+).

Belongs to the class-II aminoacyl-tRNA synthetase family. Homodimer. Zn(2+) is required as a cofactor.

The protein resides in the cytoplasm. The catalysed reaction is tRNA(Thr) + L-threonine + ATP = L-threonyl-tRNA(Thr) + AMP + diphosphate + H(+). Catalyzes the attachment of threonine to tRNA(Thr) in a two-step reaction: L-threonine is first activated by ATP to form Thr-AMP and then transferred to the acceptor end of tRNA(Thr). Also edits incorrectly charged L-seryl-tRNA(Thr). The polypeptide is Threonine--tRNA ligase (Mycolicibacterium paratuberculosis (strain ATCC BAA-968 / K-10) (Mycobacterium paratuberculosis)).